We begin with the raw amino-acid sequence, 213 residues long: Thymidine kinase (213 aa).

Residues 20-27 (GPMFSGKT) and 93-96 (DEAQ) contribute to the ATP site. The active-site Proton acceptor is the Glu94. Zn(2+) is bound by residues Cys150, Cys153, Cys185, and His188.

This sequence belongs to the thymidine kinase family. Homotetramer.

The protein resides in the cytoplasm. It catalyses the reaction thymidine + ATP = dTMP + ADP + H(+). This is Thymidine kinase from Mycoplasma genitalium (strain ATCC 33530 / DSM 19775 / NCTC 10195 / G37) (Mycoplasmoides genitalium).